The sequence spans 230 residues: Acyl-coenzyme A thioesterase THEM4 (230 aa).

The transit peptide at 1–27 directs the protein to the mitochondrion; that stretch reads MLRNCAMRLRTLGATPARRPGAARRLF. Phosphoserine occurs at positions 28 and 29. N6-succinyllysine is present on residues lysine 46 and lysine 57. At lysine 65 the chain carries N6-acetyllysine. N6-succinyllysine is present on residues lysine 89 and lysine 98. The active-site Proton donor/acceptor is the aspartate 152. Substrate is bound by residues lysine 175 and 196–197; that span reads RK. N6-succinyllysine is present on lysine 197.

Belongs to the THEM4/THEM5 thioesterase family. As to quaternary structure, homodimer and homotetramer. Interacts with AKT1 in the cytosol. (Microbial infection) Interacts with V-AKT from AKT8 murine leukemia virus. Phosphorylated.

It localises to the cell membrane. The protein localises to the cell projection. Its subcellular location is the ruffle membrane. The protein resides in the cytoplasm. It is found in the mitochondrion. It localises to the mitochondrion inner membrane. The protein localises to the mitochondrion intermembrane space. The catalysed reaction is hexadecanoyl-CoA + H2O = hexadecanoate + CoA + H(+). It carries out the reaction octanoyl-CoA + H2O = octanoate + CoA + H(+). The enzyme catalyses decanoyl-CoA + H2O = decanoate + CoA + H(+). It catalyses the reaction dodecanoyl-CoA + H2O = dodecanoate + CoA + H(+). The catalysed reaction is tetradecanoyl-CoA + H2O = tetradecanoate + CoA + H(+). It carries out the reaction (9Z)-octadecenoyl-CoA + H2O = (9Z)-octadecenoate + CoA + H(+). The enzyme catalyses (5Z,8Z,11Z,14Z)-eicosatetraenoyl-CoA + H2O = (5Z,8Z,11Z,14Z)-eicosatetraenoate + CoA + H(+). Functionally, has acyl-CoA thioesterase activity towards medium and long-chain (C14 to C18) fatty acyl-CoA substrates, and probably plays a role in mitochondrial fatty acid metabolism. Plays a role in the apoptotic process, possibly via its regulation of AKT1 activity. The sequence is that of Acyl-coenzyme A thioesterase THEM4 (Them4) from Mus musculus (Mouse).